The following is a 615-amino-acid chain: Zinc metalloproteinase-disintegrin-like (615 aa).

Residues 1–20 form the signal peptide; it reads MIQALLVTICLVGFPHQGSS. A propeptide spanning residues 21 to 195 is cleaved from the precursor; sequence IILESGNVKD…KMNFQSANNP (175 aa). A Peptidase M12B domain is found at 204–400; it reads KYIKLAVVVD…DLPQCILNKP (197 aa). Disulfide bonds link Cys-315/Cys-395, Cys-355/Cys-379, and Cys-357/Cys-362. His-340 is a Zn(2+) binding site. Glu-341 is a catalytic residue. Positions 344 and 350 each coordinate Zn(2+). Positions 408–494 constitute a Disintegrin domain; it reads PAVCGNNFVE…DCPMDGLQRN (87 aa). Ca(2+) contacts are provided by Val-410, Asn-413, Phe-415, Glu-417, and Asp-423. 14 disulfide bridges follow: Cys-411/Cys-440, Cys-422/Cys-435, Cys-424/Cys-430, Cys-434/Cys-457, Cys-448/Cys-454, Cys-453/Cys-479, Cys-466/Cys-486, Cys-473/Cys-505, Cys-498/Cys-510, Cys-517/Cys-567, Cys-532/Cys-576, Cys-545/Cys-555, Cys-562/Cys-602, and Cys-596/Cys-608. The D/ECD-tripeptide signature appears at 472 to 474; that stretch reads DCD.

It belongs to the venom metalloproteinase (M12B) family. P-III subfamily. P-IIIa sub-subfamily. As to quaternary structure, monomer. Requires Zn(2+) as cofactor. As to expression, expressed by the venom gland.

Its subcellular location is the secreted. Functionally, snake venom zinc metalloprotease that may induce platelet aggregation. The protein is Zinc metalloproteinase-disintegrin-like of Cerberus rynchops (Dog-faced water snake).